The primary structure comprises 316 residues: MEAKLLKPAFYNSPNLNLTNSSRLISRLSIWNDKSKVGLSSGSLFLRLSAASPIRYSRGLLRVDESEYLKLESIRHSLIRQEDSIIFNLLERAQYRYNADTYDEDAFTMEGFQGSLVEFMVRETEKLHAKVDRYKSPDEHPFFPQCLPEPILPPIQYPQVLHRCAESININKKVWNMYFKHLLPRLVKPGDDGNCGSAALCDTMCLQILSKRIHFGKFVAEAKFRENPAAYETAIKEQDRTQLMQLLTYETVEEVVKKRVEIKARIFGQDITINDPETEADPSYKIQPSLVAKLYGERIMPLTKEVQIEYLLRRLD.

The transit peptide at 1–47 directs the protein to the chloroplast; that stretch reads MEAKLLKPAFYNSPNLNLTNSSRLISRLSIWNDKSKVGLSSGSLFLR. Arg-62 serves as a coordination point for L-phenylalanine. The 255-residue stretch at 62–316 folds into the Chorismate mutase domain; sequence RVDESEYLKL…QIEYLLRRLD (255 aa). Residues Arg-133 and 194-197 contribute to the L-tyrosine site; that span reads NCGS. 194 to 197 provides a ligand contact to L-phenylalanine; that stretch reads NCGS.

Homodimer. As to expression, expressed in roots, stems, cauline leaves, flowers and siliques, and at lower levels in rosette leaves.

It is found in the plastid. The protein localises to the chloroplast. The catalysed reaction is chorismate = prephenate. The protein operates within metabolic intermediate biosynthesis; prephenate biosynthesis; prephenate from chorismate: step 1/1. With respect to regulation, allosterically inhibited by tyrosine and phenylalanine. According to another report, seems not to be repressed by tyrosine and phenylalanine. Activated by tryptophan, cysteine and histidine. May play a role in chloroplast biogenesis. The chain is Chorismate mutase 3, chloroplastic from Arabidopsis thaliana (Mouse-ear cress).